A 180-amino-acid polypeptide reads, in one-letter code: uncharacterized protein (180 aa).

The signal sequence occupies residues 1–30 (MRHKIITFILAVVVIIIIGNMIGGGGGSEA). Residues 25–46 (GGGSEATSKTSSSSKAETEKTY) are disordered. Low complexity predominate over residues 29-39 (EATSKTSSSSK).

It is found in the secreted. This is an uncharacterized protein from Bacillus subtilis (strain 168).